The primary structure comprises 173 residues: Ribosome maturation factor RimM (173 aa).

The 74-residue stretch at Glu-92–Ile-165 folds into the PRC barrel domain.

This sequence belongs to the RimM family. Binds ribosomal protein uS19.

It localises to the cytoplasm. In terms of biological role, an accessory protein needed during the final step in the assembly of 30S ribosomal subunit, possibly for assembly of the head region. Essential for efficient processing of 16S rRNA. May be needed both before and after RbfA during the maturation of 16S rRNA. It has affinity for free ribosomal 30S subunits but not for 70S ribosomes. The sequence is that of Ribosome maturation factor RimM from Nitrobacter winogradskyi (strain ATCC 25391 / DSM 10237 / CIP 104748 / NCIMB 11846 / Nb-255).